We begin with the raw amino-acid sequence, 232 residues long: Ubiquinone biosynthesis O-methyltransferase (232 aa).

S-adenosyl-L-methionine contacts are provided by Arg-36, Gly-55, Asp-76, and Met-120.

This sequence belongs to the methyltransferase superfamily. UbiG/COQ3 family.

The catalysed reaction is a 3-demethylubiquinol + S-adenosyl-L-methionine = a ubiquinol + S-adenosyl-L-homocysteine + H(+). It carries out the reaction a 3-(all-trans-polyprenyl)benzene-1,2-diol + S-adenosyl-L-methionine = a 2-methoxy-6-(all-trans-polyprenyl)phenol + S-adenosyl-L-homocysteine + H(+). It participates in cofactor biosynthesis; ubiquinone biosynthesis. In terms of biological role, O-methyltransferase that catalyzes the 2 O-methylation steps in the ubiquinone biosynthetic pathway. The chain is Ubiquinone biosynthesis O-methyltransferase from Paraburkholderia phytofirmans (strain DSM 17436 / LMG 22146 / PsJN) (Burkholderia phytofirmans).